Reading from the N-terminus, the 338-residue chain is tRNA-specific 2-thiouridylase MnmA (338 aa).

ATP contacts are provided by residues 6–13 and M32; that span reads ALSGGVDS. The Nucleophile role is filled by C92. C92 and C186 form a disulfide bridge. G116 contacts ATP. Positions 134-136 are interaction with tRNA; sequence KDQ. The Cysteine persulfide intermediate role is filled by C186. The tract at residues 288–289 is interaction with tRNA; the sequence is RY.

It belongs to the MnmA/TRMU family.

Its subcellular location is the cytoplasm. It carries out the reaction S-sulfanyl-L-cysteinyl-[protein] + uridine(34) in tRNA + AH2 + ATP = 2-thiouridine(34) in tRNA + L-cysteinyl-[protein] + A + AMP + diphosphate + H(+). Catalyzes the 2-thiolation of uridine at the wobble position (U34) of tRNA, leading to the formation of s(2)U34. This chain is tRNA-specific 2-thiouridylase MnmA, found in Campylobacter fetus subsp. fetus (strain 82-40).